A 62-amino-acid polypeptide reads, in one-letter code: Calmodulin regulator protein PCP4 (62 aa).

A disordered region spans residues 1–40; sequence MSERQGAGTTNGKDKPSGENDGQKKVQEEFDIDMDAPETE. Over residues 12–28 the composition is skewed to basic and acidic residues; it reads GKDKPSGENDGQKKVQE. An acidic; binds calcium and is required for modulating the calcium-binding kinetics of calmodulin region spans residues 28–40; the sequence is EEFDIDMDAPETE. Residues 39–62 form the IQ domain; sequence TERAAVAIQSQFRKFQKKKAGSQS.

It belongs to the PCP4 family. In terms of assembly, binds to both calcium-free and calcium-bound calmodulin. The affinity for the calcium-bound form is 50-fold greater.

In terms of biological role, functions as a modulator of calcium-binding by calmodulin. Thereby, regulates calmodulin activity and the different processes it controls. For instance, may play a role in neuronal differentiation through activation of calmodulin-dependent kinase signaling pathways. This Bos taurus (Bovine) protein is Calmodulin regulator protein PCP4.